The chain runs to 264 residues: Type II iodothyronine deiodinase (264 aa).

The Lumenal segment spans residues 1-7; it reads MGLLSVD. Residues 8 to 28 form a helical; Signal-anchor for type III membrane protein membrane-spanning segment; the sequence is LLITLQILPGFFSNCLFLALY. Residues 29–264 lie on the Cytoplasmic side of the membrane; it reads DSVVLVKHVL…AESGQTGTEK (236 aa). Sec124 is a catalytic residue. A non-standard amino acid (selenocysteine) is located at residue Sec124.

The protein belongs to the iodothyronine deiodinase family. As to quaternary structure, predominantly monomer. Can form homodimers but homodimerization is not essential for enzyme activity. High levels seen in the metamorphosing tail.

It localises to the endoplasmic reticulum membrane. The enzyme catalyses 3,3',5-triiodo-L-thyronine + iodide + A + H(+) = L-thyroxine + AH2. The catalysed reaction is 3,3'-diiodo-L-thyronine + iodide + A + H(+) = 3,3',5'-triiodo-L-thyronine + AH2. It catalyses the reaction 3'-iodo-L-thyronine + iodide + A + H(+) = 3',5'-diiodo-L-thyronine + AH2. It carries out the reaction 3,3'-diiodothyronamine + iodide + A + H(+) = 3,3',5'-triiodothyronamine + AH2. The enzyme catalyses 3'-iodothyronamine + iodide + A + H(+) = 3',5'-diiodothyronamine + AH2. With respect to regulation, not inhibited by N(6)-propylthiouracil. Plays a crucial role in the metabolism of thyroid hormones (TH) and has specific roles in TH activation and inactivation by deiodination. Catalyzes the deiodination of L-thyroxine (T4) to 3,5,3'-triiodothyronine (T3) and 3',5'-diiodothyronine (3',5'-T2) to 3'-monoiodothyronine (3'-T1) via outer-ring deiodination (ORD). Catalyzes the deiodination of 3,3',5'-triiodothyronine (rT3) to 3,3'-diiodothyronine (3,3'-T2) via ORD. Catalyzes the phenolic ring deiodinations of 3,3',5'-triiodothyronamine and 3',5'- diiodothyronamine. This is Type II iodothyronine deiodinase (dio2) from Aquarana catesbeiana (American bullfrog).